A 264-amino-acid chain; its full sequence is tRNA pseudouridine synthase A (264 aa).

Asp51 acts as the Nucleophile in catalysis. Tyr109 is a substrate binding site.

This sequence belongs to the tRNA pseudouridine synthase TruA family. As to quaternary structure, homodimer.

The catalysed reaction is uridine(38/39/40) in tRNA = pseudouridine(38/39/40) in tRNA. Formation of pseudouridine at positions 38, 39 and 40 in the anticodon stem and loop of transfer RNAs. This Actinobacillus succinogenes (strain ATCC 55618 / DSM 22257 / CCUG 43843 / 130Z) protein is tRNA pseudouridine synthase A.